Reading from the N-terminus, the 1183-residue chain is M-phase phosphoprotein 9 (1183 aa).

3 disordered regions span residues 28–52, 300–334, and 472–495; these read GLNLNTDRSSPHLSTNGVSSFSGKT, KLKQNQPKRAHVEDGGSRSKQGNEQSKKTPIEKSD, and ISFSPDSVLEPSMSSPSDIDSFSQ. Residues 324 to 334 show a composition bias toward basic and acidic residues; it reads QSKKTPIEKSD. The tract at residues 401 to 800 is required for its centrosomal localization; that stretch reads TSNEMKLPSL…EAQVKQVEHE (400 aa). Residues 451-500 are interaction with CEP97; it reads KPKQQISGIQPHGLPNALDDRISFSPDSVLEPSMSSPSDIDSFSQASNVT. The span at 483–495 shows a compositional bias: low complexity; it reads SMSSPSDIDSFSQ. Positions 609 to 804 form a coiled coil; sequence DLRAYYESEI…KQVEHENMLS (196 aa). Position 781 is a phosphoserine; by TTBK2 (Ser781). Lys784 is covalently cross-linked (Glycyl lysine isopeptide (Lys-Gly) (interchain with G-Cter in ubiquitin)). Position 788 is a phosphoserine; by TTBK2 (Ser788). Residues 801-1031 are interaction with KIF24; the sequence is NMLSLRHNSR…PVSTLQRTNP (231 aa). Disordered regions lie at residues 863-894 and 910-999; these read LGHRSPLEKDSSPGSSSTSLLIKKQRETSDTP and NWGT…GFSH. Over residues 921–936 the composition is skewed to polar residues; it reads SNINPRQTETSVNASR. A compositionally biased stretch (low complexity) spans 949-967; the sequence is LNSASQRSSSLPPSNRKSS. Ser994 is subject to Phosphoserine. The stretch at 1109–1174 forms a coiled coil; that stretch reads RTLAETERFF…GSVRMTLKKF (66 aa).

As to quaternary structure, interacts with CCP110, CEP97 and KIF24. In terms of processing, TTBK2-mediated phosphorylation at Ser-781 and Ser-788, promotes its ubiquitination at Lys-784 leading to proteasomal degradation, loss of MPHOSPH9 facilitates the removal of the CP110-CEP97 complex from the mother centrioles, promoting the initiation of ciliogenesis. Phosphorylated in M (mitotic) phase. Post-translationally, ubiquitinated at Lys-784, leading to proteasomal degradation.

The protein resides in the cytoplasm. It is found in the cytoskeleton. It localises to the microtubule organizing center. Its subcellular location is the centrosome. The protein localises to the centriole. The protein resides in the golgi apparatus membrane. In terms of biological role, negatively regulates cilia formation by recruiting the CP110-CEP97 complex (a negative regulator of ciliogenesis) at the distal end of the mother centriole in ciliary cells. At the beginning of cilia formation, MPHOSPH9 undergoes TTBK2-mediated phosphorylation and degradation via the ubiquitin-proteasome system and removes itself and the CP110-CEP97 complex from the distal end of the mother centriole, which subsequently promotes cilia formation. The polypeptide is M-phase phosphoprotein 9 (MPHOSPH9) (Homo sapiens (Human)).